The primary structure comprises 483 residues: MPPSPLDDRVVVALSRPVRPQDLNLCLDSSYLGSASPGSGSHAPVLATAVVTLKAANLTYMPSSSGSARSLNCGCSSTSCCTVATYDKDHQAQTQAIAAGTATTAIGTSTTCPANQMVNNNENTGSVLSPSGGVGSPVSGTPKQLASIKIIYPNDLAKKMTKCSKSHLPSQGPVIIDCRPFMEYNKSHIQGAVHINCADKISRRRLQQGKITVLDLISCREGKDSFKRIFSKEIIVYDENTNEPSRVTPSQPLHIVLESLKREGKEPLVLKGGLSSFKQNHGNLCDNSLQLQECREVGGGASAASSMLPQSVPTTPDIENAELTPILPFLFLGNEQDAQDLDTMQRLNIGYVINVTTHLPLYHYEKGLFNYKRLPATDSNKQNLRQYFEEAFEFIEEAHQCGKGLLIHCQAGVSRSATIVIAYLMKHTRMTMTDAYKFVKGKRPIISPNLNFMGQLLEFEEDLNNGVTPRILTPKLMGMETVV.

A Rhodanese domain is found at 169-286; sequence PSQGPVIIDC…FKQNHGNLCD (118 aa). The tract at residues 200–216 is interaction with MAP kinases; that stretch reads KISRRRLQQGKITVLDL. In terms of domain architecture, Tyrosine-protein phosphatase spans 322–465; sequence ELTPILPFLF…LLEFEEDLNN (144 aa). Residue cysteine 409 is the Phosphocysteine intermediate of the active site.

It belongs to the protein-tyrosine phosphatase family. Non-receptor class dual specificity subfamily. As to quaternary structure, monomer. Interacts with MAPK14.

The protein localises to the cytoplasm. It localises to the nucleus. It carries out the reaction O-phospho-L-tyrosyl-[protein] + H2O = L-tyrosyl-[protein] + phosphate. The enzyme catalyses O-phospho-L-seryl-[protein] + H2O = L-seryl-[protein] + phosphate. The catalysed reaction is O-phospho-L-threonyl-[protein] + H2O = L-threonyl-[protein] + phosphate. Functionally, protein phosphatase involved in the inactivation of MAP kinases. Has a specificity for the MAPK11/MAPK12/MAPK13/MAPK14 subfamily. It preferably dephosphorylates p38. The polypeptide is Dual specificity protein phosphatase 10 (Dusp10) (Mus musculus (Mouse)).